Consider the following 321-residue polypeptide: MIYARIAGTGSFLPGEPITNDDLVARGIDTSDQWIIERTGIRSRHLASAEMSSSDLAKTASERALDAAGVRPDDIDLIIVATSTPDCIFPSTAALLQSKLGIRNGAAAFDVQAVCSGFVYGLTIAEKFIRSGSHKRALVVGAEVFSRILDWSDRGTCVLFGDGAGAVVLEAAEAPGILASALHADGSHHPILCVPGAVAAGQVVGDPFLRMDGQAVFKFAVRVLGDVALEVLDQAGVTVDSVDWLIPHQANIRILQATARRLGVSMDKVITTVDHHGNTSAASIPLALDLAVRDGRIRPGHRFIIEGVGGGFTWGAALLQF.

Residues C115 and H248 contribute to the active site. The interval 249 to 253 (QANIR) is ACP-binding. N278 is a catalytic residue.

This sequence belongs to the thiolase-like superfamily. FabH family. Homodimer.

Its subcellular location is the cytoplasm. The catalysed reaction is malonyl-[ACP] + acetyl-CoA + H(+) = 3-oxobutanoyl-[ACP] + CO2 + CoA. The protein operates within lipid metabolism; fatty acid biosynthesis. Functionally, catalyzes the condensation reaction of fatty acid synthesis by the addition to an acyl acceptor of two carbons from malonyl-ACP. Catalyzes the first condensation reaction which initiates fatty acid synthesis and may therefore play a role in governing the total rate of fatty acid production. Possesses both acetoacetyl-ACP synthase and acetyl transacylase activities. Its substrate specificity determines the biosynthesis of branched-chain and/or straight-chain of fatty acids. The sequence is that of Beta-ketoacyl-[acyl-carrier-protein] synthase III from Aromatoleum aromaticum (strain DSM 19018 / LMG 30748 / EbN1) (Azoarcus sp. (strain EbN1)).